The primary structure comprises 722 residues: Polyribonucleotide nucleotidyltransferase (722 aa).

Residues aspartate 486 and aspartate 492 each contribute to the Mg(2+) site. The KH domain maps to 553–612; it reads PKIVQLQIDIDKISLVIGSTGKTVKAITDEFEVKVQIEQNGKIILFGDDDFKMQKAKERI. Residues 622–717 form the S1 motif domain; it reads GEIYEGTVKK…KFGKIDLEIV (96 aa).

It belongs to the polyribonucleotide nucleotidyltransferase family. The cofactor is Mg(2+).

It localises to the cytoplasm. The enzyme catalyses RNA(n+1) + phosphate = RNA(n) + a ribonucleoside 5'-diphosphate. Involved in mRNA degradation. Catalyzes the phosphorolysis of single-stranded polyribonucleotides processively in the 3'- to 5'-direction. The sequence is that of Polyribonucleotide nucleotidyltransferase from Borreliella burgdorferi (strain ZS7) (Borrelia burgdorferi).